Here is a 212-residue protein sequence, read N- to C-terminus: Spore germination lipase LipC (212 aa).

S11 functions as the Nucleophile in the catalytic mechanism. Positions 50 and 82 each coordinate substrate. Catalysis depends on residues D186 and H189.

Belongs to the 'GDSL' lipolytic enzyme family.

The protein resides in the spore coat. In terms of biological role, lipase involved in spore germination. The sequence is that of Spore germination lipase LipC (lipC) from Bacillus licheniformis (strain ATCC 14580 / DSM 13 / JCM 2505 / CCUG 7422 / NBRC 12200 / NCIMB 9375 / NCTC 10341 / NRRL NRS-1264 / Gibson 46).